The primary structure comprises 269 residues: Myelin protein zero-like protein 1 (269 aa).

Positions methionine 1 to valine 35 are cleaved as a signal peptide. The 111-residue stretch at serine 36–glutamine 146 folds into the Ig-like V-type domain. At serine 36–valine 162 the chain is on the extracellular side. N-linked (GlcNAc...) asparagine glycans are attached at residues asparagine 50 and asparagine 130. A disulfide bridge connects residues cysteine 58 and cysteine 135. The helical transmembrane segment at phenylalanine 163–isoleucine 183 threads the bilayer. Residues serine 184–asparagine 269 are Cytoplasmic-facing. Residues aspartate 199–proline 238 are disordered. Residues glycine 202 to proline 211 show a composition bias toward polar residues. A phosphoserine mark is found at serine 204, serine 206, serine 208, serine 210, serine 219, and serine 221. Positions valine 239–leucine 244 match the ITIM motif 1 motif. Tyrosine 241 carries the phosphotyrosine modification. Serine 260 bears the Phosphoserine mark. Positions valine 261–isoleucine 266 match the ITIM motif 2 motif. Position 263 is a phosphotyrosine (tyrosine 263).

This sequence belongs to the myelin P0 protein family. As to quaternary structure, interacts with phosphorylated PTPN11/SHP-2. In terms of processing, phosphorylated on tyrosine residues upon stimulation with pervanadate and concanavalin-A (ConA). Phosphorylation at Tyr-241 and Tyr-263 is required for interaction with PTPN11/SHP-2. Dephosphorylated by PTPN11/SHP-2 (in vitro). Post-translationally, N-glycosylated. N-glycosylation is required for concanavalin A binding. As to expression, widely expressed with highest levels in heart, placenta, kidney and pancreas. Isoform 3 is relatively abundant in hematopoietic tissues and fetal liver. Isoform 1 and isoform 3 are expressed in CD14- PB monocytes and pre-B cell progenitors. Isoform 3 appears to be the major isoform in CD34- promyelocytic and promonocytic cells. During differentiation in monocytic cells, the expression level of isoform 3 decreases and that of isoform 1 increases. Isoform 1 is prominent in stromal cells and, to a lesser extent, in umbilical vein endothelial cells and erythroid progenitors. Isoform 2 is expressed in a erythroid progenitor cell line.

It is found in the membrane. Functionally, cell surface receptor, which is involved in signal transduction processes. Recruits PTPN11/SHP-2 to the cell membrane and is a putative substrate of PTPN11/SHP-2. Is a major receptor for concanavalin-A (ConA) and is involved in cellular signaling induced by ConA, which probably includes Src family tyrosine-protein kinases. Isoform 3 seems to have a dominant negative role; it blocks tyrosine phosphorylation of MPZL1 induced by ConA. Isoform 1, but not isoform 2 and isoform 3, may be involved in regulation of integrin-mediated cell motility. This Homo sapiens (Human) protein is Myelin protein zero-like protein 1 (MPZL1).